Reading from the N-terminus, the 286-residue chain is Neuferricin homolog (286 aa).

The first 23 residues, 1–23, serve as a signal peptide directing secretion; that stretch reads MFGFVKYLFKLQFLFILAAVLAG. One can recognise a Cytochrome b5 heme-binding domain in the interval 61 to 145; sequence ATVLTSAELS…KPNDLLGLAN (85 aa). Residues 176–200 are a coiled coil; that stretch reads HKYLALLEQAQIAKAEVDELRSKYP.

Belongs to the cytochrome b5 family. MAPR subfamily.

The protein localises to the secreted. In terms of biological role, heme-binding protein. This chain is Neuferricin homolog, found in Drosophila pseudoobscura pseudoobscura (Fruit fly).